The primary structure comprises 419 residues: Phosphatidylcholine:ceramide cholinephosphotransferase 1 (419 aa).

Residues 13–76 (WSPKKVADWL…LDMIETLKME (64 aa)) form the SAM domain. Ser14 bears the Phosphoserine mark. 5 helical membrane passes run 142-162 (FLAF…ISVV), 190-210 (FSIC…QWLL), 221-241 (FFCI…VTTL), 282-302 (MCGD…YLFI), and 310-330 (LWWY…CILL). Residue His291 is part of the active site. The Cytoplasmic portion of the chain corresponds to 331 to 419 (AHDHYTVDVV…VKYSRLVNDT (89 aa)). Active-site residues include His334 and Asp338.

The protein belongs to the sphingomyelin synthase family. In terms of tissue distribution, isoform 1 is widely expressed, isoform 2 shows a more narrow distribution and isoform 3 is detected only in testis and heart.

It is found in the golgi apparatus membrane. The enzyme catalyses an N-acylsphing-4-enine + a 1,2-diacyl-sn-glycero-3-phosphocholine = a sphingomyelin + a 1,2-diacyl-sn-glycerol. It catalyses the reaction 1-(9Z-octadecenoyl)-2-acyl-sn-3-glycerol + a sphingomyelin = a 1-(9Z-octadecenoyl)-2-acyl-sn-glycero-3-phosphocholine + an N-acylsphing-4-enine. The catalysed reaction is N-hexadecanoylsphinganine + a 1,2-diacyl-sn-glycero-3-phosphocholine = N-hexadecanoyl-sphinganine-1-phosphocholine + a 1,2-diacyl-sn-glycerol. It carries out the reaction N-hexadecanoyl-(4R)-hydroxysphinganine + a 1,2-diacyl-sn-glycero-3-phosphocholine = N-hexadecanoyl-(4R)-hydroxysphinganine-phosphocholine + a 1,2-diacyl-sn-glycerol. The enzyme catalyses an N-acylsphing-4-enine + a 1,2-diacyl-sn-glycero-3-phosphoethanolamine = an N-acylsphing-4-enine 1-phosphoethanolamine + a 1,2-diacyl-sn-glycerol. Its pathway is sphingolipid metabolism. In terms of biological role, major sphingomyelin synthase at the Golgi apparatus. Catalyzes the reversible transfer of phosphocholine moiety in sphingomyelin biosynthesis: in the forward reaction transfers phosphocholine head group of phosphatidylcholine (PC) on to ceramide (CER) to form ceramide phosphocholine (sphingomyelin, SM) and diacylglycerol (DAG) as by-product, and in the reverse reaction transfers phosphocholine from SM to DAG to form PC and CER. The direction of the reaction depends on the levels of CER and DAG in Golgi membranes. Converts the newly synthesized CER, that is transported from the endoplasmic reticulum to the trans-Golgi by the Cer transport protein (CERT), to SM. Can form a heteromeric complex with glucosylceramide synthase (GCS) increasing SMS activity and reducing glucosylceramide synthesis, a critical mechanism that controls the metabolic fate of CER in the Golgi. Does not use free phosphorylcholine or CDP-choline as donor. Can also transfer phosphoethanolamine head group of phosphatidylethanolamine (PE) on to CER to form ceramide phosphoethanolamine (CPE). Regulates receptor-mediated signal transduction via mitogenic DAG and proapoptotic CER, as well as via SM, a structural component of membrane rafts that serve as platforms for signal transduction and protein sorting. Plays a role in secretory transport via regulation of DAG pool at the Golgi apparatus and its downstream effects on PRKD1. Functionally, (Microbial infection) Contributes to the brain SM production for Japanese encephalitis virus attachment and infection. The protein is Phosphatidylcholine:ceramide cholinephosphotransferase 1 (Sgms1) of Mus musculus (Mouse).